We begin with the raw amino-acid sequence, 729 residues long: MLYQSETLQLHWLENGIAELVFDAPGSVNKLDTKTVANLGEALNVLEKQSELKGLLLRSAKTALIVGADITEFLSLFNAPPEKLHQWLVFANTIFNRLEDLPVPTISAINGYALGGGCECILATDFRIASPEARIGLPETKLGIMPGFGGSVRLPRLLGADSALEIIATGKDVTANDALKIGLVDAVVDPEKLVGSALTMLKQAIDGKLDWQAARRPKLEPLKLNPTEAAMCFTIAKGRVMQVAGKHYPAPLTAVKTIEAAAKFGRTEALNLETNSFVPLAGSNEARALVGIFLNDQYVKAQAKKLSKGVAAPKLAAVLGAGIMGGGIAYQSALKSVPVIMKDINENSLDLGMNEAAKLLNKQLERGKVDGLKMASILATIRPTLDYAGIERAQVIVEAVVENPKVKAAVLAEVEALIGEDTVLASNTSTIPIDQLAKSLKRPENFCGMHFFNPVHQMPLVEIIRGAKTSDKTLAAVVAYATQMGKTPIVVNDCPGFFVNRVLFPYLAGFGMLVRDGGDFHQIDKVMEKQFGWPMGPAYLLDVVGIDTAHHAQAVMAAGFPERMNKDYRDAVDVMFDNQRFGQKNGQGFYRYTQDAKGKPRKENDEQVDKLLAEISQPLQEFSDEDIIARTMIPMINEVVRCLEEGIIASAAEGDMALVYGLGFPPFHGGVFRYLDTLGSANYVEMAQRYAHLGALYHVPAGLRAKAEHNESYYPVAAALLDVSTNQPA.

Residues 1-189 (MLYQSETLQL…KIGLVDAVVD (189 aa)) form an enoyl-CoA hydratase/isomerase region. Asp-296 is a binding site for substrate. A 3-hydroxyacyl-CoA dehydrogenase region spans residues 311–729 (AAPKLAAVLG…LLDVSTNQPA (419 aa)). Residues Met-324, Asp-343, 400-402 (VVE), Lys-407, and Ser-429 each bind NAD(+). His-450 (for 3-hydroxyacyl-CoA dehydrogenase activity) is an active-site residue. Asn-453 serves as a coordination point for NAD(+). Substrate contacts are provided by Asn-500 and Tyr-660.

In the N-terminal section; belongs to the enoyl-CoA hydratase/isomerase family. The protein in the C-terminal section; belongs to the 3-hydroxyacyl-CoA dehydrogenase family. As to quaternary structure, heterotetramer of two alpha chains (FadB) and two beta chains (FadA).

It catalyses the reaction a (3S)-3-hydroxyacyl-CoA + NAD(+) = a 3-oxoacyl-CoA + NADH + H(+). It carries out the reaction a (3S)-3-hydroxyacyl-CoA = a (2E)-enoyl-CoA + H2O. The enzyme catalyses a 4-saturated-(3S)-3-hydroxyacyl-CoA = a (3E)-enoyl-CoA + H2O. The catalysed reaction is (3S)-3-hydroxybutanoyl-CoA = (3R)-3-hydroxybutanoyl-CoA. It catalyses the reaction a (3Z)-enoyl-CoA = a 4-saturated (2E)-enoyl-CoA. It carries out the reaction a (3E)-enoyl-CoA = a 4-saturated (2E)-enoyl-CoA. Its pathway is lipid metabolism; fatty acid beta-oxidation. In terms of biological role, involved in the aerobic and anaerobic degradation of long-chain fatty acids via beta-oxidation cycle. Catalyzes the formation of 3-oxoacyl-CoA from enoyl-CoA via L-3-hydroxyacyl-CoA. It can also use D-3-hydroxyacyl-CoA and cis-3-enoyl-CoA as substrate. In Yersinia pseudotuberculosis serotype IB (strain PB1/+), this protein is Fatty acid oxidation complex subunit alpha.